The sequence spans 396 residues: Elongation factor Tu (396 aa).

One can recognise a tr-type G domain in the interval lysine 10–glutamate 205. The G1 stretch occupies residues glycine 19 to threonine 26. Residue glycine 19–threonine 26 participates in GTP binding. Threonine 26 is a Mg(2+) binding site. The tract at residues glycine 62 to asparagine 66 is G2. The interval aspartate 83–glycine 86 is G3. Residues aspartate 83–histidine 87 and asparagine 138–aspartate 141 each bind GTP. A G4 region spans residues asparagine 138–aspartate 141. The G5 stretch occupies residues serine 175–leucine 177.

It belongs to the TRAFAC class translation factor GTPase superfamily. Classic translation factor GTPase family. EF-Tu/EF-1A subfamily. In terms of assembly, monomer.

The protein resides in the cytoplasm. It carries out the reaction GTP + H2O = GDP + phosphate + H(+). GTP hydrolase that promotes the GTP-dependent binding of aminoacyl-tRNA to the A-site of ribosomes during protein biosynthesis. This is Elongation factor Tu from Corynebacterium jeikeium (strain K411).